Reading from the N-terminus, the 67-residue chain is Penaeidin-4a (67 aa).

The signal sequence occupies residues 1 to 19 (MRLVVCLVFLASFALVCQG). Disulfide bonds link Cys42-Cys56, Cys45-Cys63, and Cys57-Cys64. Arg66 bears the Arginine amide mark.

The protein belongs to the penaeidin family.

The protein resides in the cytoplasmic granule. Antibacterial and antifungal activity. Presents chitin-binding activity. This is Penaeidin-4a from Penaeus vannamei (Whiteleg shrimp).